The sequence spans 361 residues: Probable U3 small nucleolar RNA-associated protein 11 (361 aa).

Disordered stretches follow at residues 1 to 52 (MTKG…KKRK), 200 to 235 (LMSG…TPET), 262 to 295 (KRES…TRLL), and 311 to 361 (RHVR…RRAR). The segment covering 17–33 (HLKRKTHLERSQPKSRQ) has biased composition (basic residues). Basic and acidic residues-rich tracts occupy residues 37–46 (QLEKHKDHVL) and 217–228 (RREVQEKMRRSG). The span at 278 to 287 (DDGEQEEAAA) shows a compositional bias: acidic residues. Residues 342–352 (RQMEQRRESRF) are compositionally biased toward basic and acidic residues.

This sequence belongs to the UTP11 family. In terms of assembly, component of the ribosomal small subunit (SSU) processome.

Its subcellular location is the nucleus. The protein localises to the nucleolus. Functionally, involved in nucleolar processing of pre-18S ribosomal RNA. The polypeptide is Probable U3 small nucleolar RNA-associated protein 11 (Leishmania major).